A 479-amino-acid chain; its full sequence is Lincomycin resistance protein LmrB (479 aa).

A run of 14 helical transmembrane segments spans residues 19–41 (MISLLLAGFIGMFSETALNIALT), 56–78 (WLTTGYLLVLGILVPVSGLLLQW), 85–107 (FTVSLIFSILGTFIAALAPSFSF), 112–134 (RIVQALGTGLLLPLMFNTILVIF), 141–160 (AAMGTIGLVIMFAPAIGPTF), 170–192 (WHWIFWISLPFLVLALVFGIAYM), 205–222 (VLSIILSTIGFGGIVFGF), 232–251 (WSSPTVIVSLIVGVVGLILF), 272–294 (MFILGVIMVFICMMVILSSMLLL), 304–326 (LTAFASGLVLLPGGILNGFMSPV), 338–355 (WLVIPGFVIVTVVLWFFS), 360–382 (TSTAVLIIILHTCLMIGISMIMM), 403–425 (IMNTLQQMAGAIGTAVAVSIMAA), and 449–471 (AGVQHAFVFAMIVAIIGLIGAFF).

Belongs to the major facilitator superfamily. EmrB family.

It localises to the cell membrane. Functionally, proton-dependent transporter. May mediate the efflux of lincomycin. The polypeptide is Lincomycin resistance protein LmrB (lmrB) (Bacillus subtilis (strain 168)).